The sequence spans 234 residues: Sperm flagellar protein 1 (234 aa).

Positions 7 to 112 constitute a Calponin-homology (CH) domain; the sequence is EEALHQLYLW…VLIPLRQRLE (106 aa). Positions 181–234 are essential for homodimerization and microtubule bundling activity; sequence VLQIAEKEQELLASQETVQVLQMKVKRLEHLLQLKNVRIDDLSRRLQQAERKQR.

Homodimer. Interacts with actin, TJP1, CGN and CDH1. In terms of tissue distribution, expressed predominantly in the seminiferous epithelium of adult testis. Expressed in pillar cells of the organ of Corti (at protein level). Expressed in brain, kidney, lung and testis. Highly expressed in the trachea, lung and oviduct.

Its subcellular location is the cytoplasm. It is found in the cell projection. It localises to the cilium. The protein resides in the flagellum. The protein localises to the cytoskeleton. Its subcellular location is the cilium axoneme. It is found in the apical cell membrane. It localises to the basolateral cell membrane. The protein resides in the stress fiber. The protein localises to the microvillus. Its subcellular location is the lamellipodium. It is found in the filopodium. Microtubule-associated protein that promotes microtubule bundling and stabilizes microtubules against depolymerization in response to cold shock. Microtubule-associated protein involved in the stabilization of microtubules along the axis of migration during radial intercalation. Promotes the establishment and stabilization of an axis of microtubules required for the active migration of cells into the outer epithelium. Essential for ciliary central apparatus formation which requires both its microtubule-binding and bundling activities and for ciliary localization of HYDIN and SPAG6 in ependymal cilia. Binds actin in intestinal epithelial cells (IECs), essential for IECs survival and contributes to formation of filopodia and lamellipodia in migrating IECs. Regulates planar cell polarity signaling pathway and asymmetric microtubule accumulation in ciliated epithelia. The sequence is that of Sperm flagellar protein 1 (Spef1) from Mus musculus (Mouse).